A 100-amino-acid polypeptide reads, in one-letter code: uncharacterized protein (100 aa).

The signal sequence occupies residues 1-18 (MWGFLVLKARWLVTPVRT). The interval 48–86 (LTRGVIRVSPQERSQQNQSAPKGPTPSTRPKPRTLGPQA) is disordered. Polar residues predominate over residues 58–69 (QERSQQNQSAPK). N-linked (GlcNAc...) asparagine glycosylation occurs at Asn-64.

Its subcellular location is the secreted. This is an uncharacterized protein from Homo sapiens (Human).